Consider the following 306-residue polypeptide: Ribosomal protein L11 methyltransferase (306 aa).

The S-adenosyl-L-methionine site is built by Thr-154, Gly-179, Asp-201, and Asn-242.

It belongs to the methyltransferase superfamily. PrmA family.

The protein resides in the cytoplasm. The enzyme catalyses L-lysyl-[protein] + 3 S-adenosyl-L-methionine = N(6),N(6),N(6)-trimethyl-L-lysyl-[protein] + 3 S-adenosyl-L-homocysteine + 3 H(+). In terms of biological role, methylates ribosomal protein L11. The polypeptide is Ribosomal protein L11 methyltransferase (Xylella fastidiosa (strain Temecula1 / ATCC 700964)).